We begin with the raw amino-acid sequence, 1236 residues long: Calcium-activated potassium channel subunit alpha-1 (1236 aa).

Over residues 1–21 (MANGGGGGGGSSGGGGGGGGS) the composition is skewed to gly residues. A disordered region spans residues 1 to 61 (MANGGGGGGG…SSSSSSSSSV (61 aa)). Residues 1–86 (MANGGGGGGG…VPCDSRGQRM (86 aa)) are Extracellular-facing. The span at 39–60 (SSSSSSSSSSSSSSSSSSSSSS) shows a compositional bias: low complexity. The helical transmembrane segment at 87–107 (WWAFLASSMVTFFGGLFIILL) threads the bilayer. Residues 108–178 (WRTLKYLWTV…MISAQTLTGR (71 aa)) are Cytoplasmic-facing. S-palmitoyl cysteine attachment occurs at residues cysteine 118, cysteine 119, and cysteine 121. The helical transmembrane segment at 179–199 (VLVVLVFALSIGALVIYFIDS) threads the bilayer. Residues 200 to 214 (SNPIESCQNFYKDFT) are Extracellular-facing. A helical membrane pass occupies residues 215–235 (LQIDMAFNVFFLLYFGLRFIA). Residues 236–239 (ANDK) lie on the Cytoplasmic side of the membrane. A helical transmembrane segment spans residues 240–260 (LWFWLEVNSVVDFFTVPPVFV). The Extracellular segment spans residues 261–264 (SVYL). The helical transmembrane segment at 265 to 285 (NRSWLGLRFLRALRLIQFSEI) threads the bilayer. Topologically, residues 286–300 (LQFLNILKTSNSIKL) are cytoplasmic. The chain crosses the membrane as a helical span at residues 301-321 (VNLLSIFISTWLTAAGFIHLV). Topologically, residues 322-335 (ENSGDPWENFQNNQ) are extracellular. Positions 336-358 (ALTYWECVYLLMVTMSTVGYGDV) form an intramembrane region, pore-forming. Positions 352–355 (TVGY) match the Selectivity for potassium motif. Over 359–367 (YAKTTLGRL) the chain is Extracellular. The helical transmembrane segment at 368-388 (FMVFFILGGLAMFASYVPEII) threads the bilayer. The Cytoplasmic portion of the chain corresponds to 389-1236 (ELIGNRKKYG…KQKYVQEERL (848 aa)). The region spanning 407–549 (RKHIVVCGHI…WNWKEGDDAI (143 aa)) is the RCK N-terminal 1 domain. Residues glutamate 439, glutamine 462, and glutamate 464 each contribute to the Mg(2+) site. A segment S7 region spans residues 556-576 (LGFIAQSCLAQGLSTMLANLF). The segment S8 stretch occupies residues 613-633 (LSFPTVCELCFVKLKLLMIAI). The interval 677–681 (CKACH) is heme-binding motif. Residues 757–787 (EDEQPSTLSPKKKQRNGGMRNSPNTSPKLMR) are disordered. Position 763 is a phosphothreonine (threonine 763). Residues serine 765, serine 778, and serine 782 each carry the phosphoserine modification. Residues 837–857 (VLSGHVVVCIFGDVSSALIGL) form a segment S9 region. One can recognise an RCK N-terminal 2 domain in the interval 839–983 (SGHVVVCIFG…MDRSSPDNSP (145 aa)). At threonine 970 the chain carries Phosphothreonine. Serine 978 and serine 982 each carry phosphoserine. The Calcium bowl motif lies at 1003–1025 (TELVNDTNVQFLDQDDDDDPDTE). Residues glutamine 1012, aspartate 1015, aspartate 1018, and aspartate 1020 each coordinate Ca(2+). The segment S10 stretch occupies residues 1032 to 1052 (FACGTAFAVSVLDSLMSATYF). The span at 1186-1211 (RASLSHSSHSSQSSSKKSSSVHSIPS) shows a compositional bias: low complexity. Residues 1186 to 1236 (RASLSHSSHSSQSSSKKSSSVHSIPSTANRQNRPKSRESRDKQKYVQEERL) form a disordered region. Over residues 1220–1236 (KSRESRDKQKYVQEERL) the composition is skewed to basic and acidic residues. Phosphoserine occurs at positions 1221 and 1224.

Belongs to the potassium channel family. Calcium-activated (TC 1.A.1.3) subfamily. KCa1.1/KCNMA1 sub-subfamily. As to quaternary structure, homotetramer; which constitutes the calcium-activated potassium channel. Interacts with RAB11B. Interacts with beta subunits KCNMB1, KCNMB2, KCNMB3 and KCNMB4. Interacts with gamma subunits LRRC26, LRRC38, LRRC52 and LRRC55. Beta and gamma subunits are accessory, and modulate its activity. Post-translationally, phosphorylated. Phosphorylation by kinases such as PKA and/or PKG. In smooth muscles, phosphorylation affects its activity. In terms of processing, palmitoylation by ZDHHC22 and ZDHHC23 within the intracellular linker between the S0 and S1 transmembrane domains regulates localization to the plasma membrane. Depalmitoylated by LYPLA1 and LYPLAL1, leading to retard exit from the trans-Golgi network. In terms of tissue distribution, widely expressed. Except in myocytes, it is almost ubiquitously expressed.

The protein resides in the cell membrane. The enzyme catalyses K(+)(in) = K(+)(out). Ethanol and carbon monoxide-bound heme increase channel activation. Heme inhibits channel activation. In terms of biological role, potassium channel activated by both membrane depolarization or increase in cytosolic Ca(2+) that mediates export of K(+). It is also activated by the concentration of cytosolic Mg(2+). Its activation dampens the excitatory events that elevate the cytosolic Ca(2+) concentration and/or depolarize the cell membrane. It therefore contributes to repolarization of the membrane potential. Plays a key role in controlling excitability in a number of systems, such as regulation of the contraction of smooth muscle, the tuning of hair cells in the cochlea, regulation of transmitter release, and innate immunity. In smooth muscles, its activation by high level of Ca(2+), caused by ryanodine receptors in the sarcoplasmic reticulum, regulates the membrane potential. In cochlea cells, its number and kinetic properties partly determine the characteristic frequency of each hair cell and thereby helps to establish a tonotopic map. Kinetics of KCNMA1 channels are determined by alternative splicing, phosphorylation status and its combination with modulating beta subunits. Highly sensitive to both iberiotoxin (IbTx) and charybdotoxin (CTX). Possibly induces sleep when activated by melatonin and through melatonin receptor MTNR1A-dependent dissociation of G-beta and G-gamma subunits, leading to increased sensitivity to Ca(2+) and reduced synaptic transmission. Potassium channel activated by both membrane depolarization or increase in cytosolic Ca(2+) that mediates export of K(+). The chain is Calcium-activated potassium channel subunit alpha-1 from Homo sapiens (Human).